Reading from the N-terminus, the 736-residue chain is Polyribonucleotide nucleotidyltransferase (736 aa).

Residues Asp-488 and Asp-494 each contribute to the Mg(2+) site. One can recognise a KH domain in the interval 555–614 (PMVQTLEIQKEKIRDVIGLGGKVIKELCKTFDVEIDISENGEVKVWGNVGENVKKAVQSI). An S1 motif domain is found at 624–692 (GDIFDGEVVK…HKNRVKLTLR (69 aa)).

The protein belongs to the polyribonucleotide nucleotidyltransferase family. Mg(2+) serves as cofactor.

The protein resides in the cytoplasm. It catalyses the reaction RNA(n+1) + phosphate = RNA(n) + a ribonucleoside 5'-diphosphate. Involved in mRNA degradation. Catalyzes the phosphorolysis of single-stranded polyribonucleotides processively in the 3'- to 5'-direction. The sequence is that of Polyribonucleotide nucleotidyltransferase from Orientia tsutsugamushi (strain Ikeda) (Rickettsia tsutsugamushi).